The chain runs to 93 residues: RNA-binding protein Hfq (93 aa).

Positions 11–71 (DVFLNHVRKS…ISTVMPGAPI (61 aa)) constitute a Sm domain.

It belongs to the Hfq family. As to quaternary structure, homohexamer.

RNA chaperone that binds small regulatory RNA (sRNAs) and mRNAs to facilitate mRNA translational regulation in response to envelope stress, environmental stress and changes in metabolite concentrations. Also binds with high specificity to tRNAs. This chain is RNA-binding protein Hfq, found in Granulibacter bethesdensis (strain ATCC BAA-1260 / CGDNIH1).